The following is a 170-amino-acid chain: Transcription factor E (170 aa).

Residues 1 to 93 form the HTH TFE/IIEalpha-type domain; the sequence is MKDAYLYVVE…AWYVDDEIIR (93 aa).

Belongs to the TFE family. As to quaternary structure, monomer. Interaction with RNA polymerase subunits RpoF and RpoE is necessary for Tfe stimulatory transcription activity. Able to interact with Tbp and RNA polymerase in the absence of DNA promoter. Interacts both with the preinitiation and elongation complexes.

In terms of biological role, transcription factor that plays a role in the activation of archaeal genes transcribed by RNA polymerase. Facilitates transcription initiation by enhancing TATA-box recognition by TATA-box-binding protein (Tbp), and transcription factor B (Tfb) and RNA polymerase recruitment. Not absolutely required for transcription in vitro, but particularly important in cases where Tbp or Tfb function is not optimal. It dynamically alters the nucleic acid-binding properties of RNA polymerases by stabilizing the initiation complex and destabilizing elongation complexes. Seems to translocate with the RNA polymerase following initiation and acts by binding to the non template strand of the transcription bubble in elongation complexes. This chain is Transcription factor E, found in Pyrobaculum arsenaticum (strain DSM 13514 / JCM 11321 / PZ6).